The primary structure comprises 379 residues: Galactose-1-phosphate uridylyltransferase (379 aa).

Positions 1 to 21 are disordered; the sequence is MSRSGTDPQQRQQASEADAAA. Over residues 9–21 the composition is skewed to low complexity; that stretch reads QQRQQASEADAAA. Cys75 contacts Zn(2+). Residues Ala81, 97-98, and Asn173 contribute to the UDP-alpha-D-glucose site; that span reads ND. His184 provides a ligand contact to Zn(2+). The Tele-UMP-histidine intermediate role is filled by His186. Gln188 is a binding site for UDP-alpha-D-glucose. Residues Glu202, His301, His319, and His321 each coordinate Zn(2+). Residues 334–337 and 339–340 each bind UDP-alpha-D-glucose; these read KFMV and YE.

This sequence belongs to the galactose-1-phosphate uridylyltransferase type 1 family. Homodimer. Zn(2+) serves as cofactor.

It carries out the reaction alpha-D-galactose 1-phosphate + UDP-alpha-D-glucose = alpha-D-glucose 1-phosphate + UDP-alpha-D-galactose. Its pathway is carbohydrate metabolism; galactose metabolism. Functionally, plays an important role in galactose metabolism. The chain is Galactose-1-phosphate uridylyltransferase (GALT) from Homo sapiens (Human).